The sequence spans 201 residues: uncharacterized protein (201 aa).

2 disordered regions span residues 46–80 (PLVN…SYDE) and 143–201 (SSTS…ANPA). 2 stretches are compositionally biased toward polar residues: residues 64 to 78 (GSQN…SQSY) and 143 to 167 (SSTS…NSPA).

This is an uncharacterized protein from Legionella pneumophila.